The following is a 118-amino-acid chain: Ribonuclease P protein component (118 aa).

This sequence belongs to the RnpA family. As to quaternary structure, consists of a catalytic RNA component (M1 or rnpB) and a protein subunit.

The enzyme catalyses Endonucleolytic cleavage of RNA, removing 5'-extranucleotides from tRNA precursor.. Functionally, RNaseP catalyzes the removal of the 5'-leader sequence from pre-tRNA to produce the mature 5'-terminus. It can also cleave other RNA substrates such as 4.5S RNA. The protein component plays an auxiliary but essential role in vivo by binding to the 5'-leader sequence and broadening the substrate specificity of the ribozyme. The sequence is that of Ribonuclease P protein component from Vibrio vulnificus (strain CMCP6).